The sequence spans 178 residues: ATP synthase subunit delta (178 aa).

It belongs to the ATPase delta chain family. F-type ATPases have 2 components, F(1) - the catalytic core - and F(0) - the membrane proton channel. F(1) has five subunits: alpha(3), beta(3), gamma(1), delta(1), epsilon(1). F(0) has three main subunits: a(1), b(2) and c(10-14). The alpha and beta chains form an alternating ring which encloses part of the gamma chain. F(1) is attached to F(0) by a central stalk formed by the gamma and epsilon chains, while a peripheral stalk is formed by the delta and b chains.

It localises to the cell inner membrane. In terms of biological role, f(1)F(0) ATP synthase produces ATP from ADP in the presence of a proton or sodium gradient. F-type ATPases consist of two structural domains, F(1) containing the extramembraneous catalytic core and F(0) containing the membrane proton channel, linked together by a central stalk and a peripheral stalk. During catalysis, ATP synthesis in the catalytic domain of F(1) is coupled via a rotary mechanism of the central stalk subunits to proton translocation. Its function is as follows. This protein is part of the stalk that links CF(0) to CF(1). It either transmits conformational changes from CF(0) to CF(1) or is implicated in proton conduction. The polypeptide is ATP synthase subunit delta (Polynucleobacter necessarius subsp. necessarius (strain STIR1)).